We begin with the raw amino-acid sequence, 1865 residues long: Dedicator of cytokinesis protein 1 (1865 aa).

Residues 9-70 (REEKYGVAFY…PASYIHLKEA (62 aa)) form the SH3 domain. In terms of domain architecture, C2 DOCK-type spans 425 to 609 (RNDIYVTLVQ…DSFQISTLVC (185 aa)). The DOCKER domain occupies 1207–1617 (YKEIEREEMY…VEKEYGVRIM (411 aa)). Disordered stretches follow at residues 1619 to 1716 (SSLD…EFKP) and 1732 to 1865 (TISP…GIVQ). Positions 1639-1666 (PSSSRPLSVASVSSLSSDSTPSRPGSDG) are enriched in low complexity. Residues 1680 to 1694 (RSQDKLDKDDLEKEK) show a composition bias toward basic and acidic residues. S1681 is modified (phosphoserine). Positions 1687 to 1695 (KDDLEKEKK) are phosphoinositide-binding. Basic residues predominate over residues 1695–1704 (KDKKKEKRNS). A compositionally biased stretch (basic and acidic residues) spans 1705-1716 (KHQEIFEKEFKP). Phosphoserine is present on residues S1743, S1751, S1756, S1761, and S1764. Residues 1756-1766 (SVSPSSPSSQQ) show a composition bias toward low complexity. Phosphothreonine occurs at positions 1767 and 1772. An interaction with NCK2 second and third SH3 domain (minor) region spans residues 1793 to 1819 (ADVADVPPPLPLKGSVADYGNLMENQD). Residues 1799–1805 (PPPLPLK) carry the SH3-binding; interaction with CRK motif. The tract at residues 1820 to 1836 (LLGSPTPPPPPPHQRHL) is interaction with NCK2 third SH3 domain (major). The segment covering 1824–1851 (PTPPPPPPHQRHLPPPLPSKTPPPPPPK) has biased composition (pro residues). The segment at 1837-1852 (PPPLPSKTPPPPPPKT) is interaction with NCK2 (minor). The SH3-binding; interaction with CRK motif lies at 1838-1843 (PPLPSK). Over residues 1855–1865 (KQASVDSGIVQ) the composition is skewed to polar residues. Position 1858 is a phosphoserine (S1858).

Belongs to the DOCK family. In terms of assembly, interacts with the SH3 domains of CRK and NCK2 via multiple sites. Interacts with nucleotide-free RAC1 via its DOCKER domain. Interacts with ELMO1, ELMO2 and probably ELMO3 via its SH3 domain. Interacts with ADGRB1. Identified in a complex with AUTS2 and ELMO2. In terms of tissue distribution, highly expressed in placenta, lung, kidney, pancreas and ovary. Expressed at intermediate level in thymus, testes and colon.

The protein resides in the cytoplasm. Its subcellular location is the membrane. Functionally, involved in cytoskeletal rearrangements required for phagocytosis of apoptotic cells and cell motility. Along with DOCK1, mediates CRK/CRKL regulation of epithelial and endothelial cell spreading and migration on type IV collagen. Functions as a guanine nucleotide exchange factor (GEF), which activates Rac Rho small GTPases by exchanging bound GDP for free GTP. Its GEF activity may be enhanced by ELMO1. In Homo sapiens (Human), this protein is Dedicator of cytokinesis protein 1 (DOCK1).